The sequence spans 207 residues: Large ribosomal subunit protein uL4 (207 aa).

Positions 44–77 (LRQGTHKTKGRSEVRGGGRKPWRQKGTGRARQGS) are disordered. The segment covering 60-71 (GGRKPWRQKGTG) has biased composition (basic residues).

The protein belongs to the universal ribosomal protein uL4 family. In terms of assembly, part of the 50S ribosomal subunit.

Functionally, one of the primary rRNA binding proteins, this protein initially binds near the 5'-end of the 23S rRNA. It is important during the early stages of 50S assembly. It makes multiple contacts with different domains of the 23S rRNA in the assembled 50S subunit and ribosome. Its function is as follows. Forms part of the polypeptide exit tunnel. This Shouchella clausii (strain KSM-K16) (Alkalihalobacillus clausii) protein is Large ribosomal subunit protein uL4.